Consider the following 147-residue polypeptide: Transthyretin (147 aa).

An N-terminal signal peptide occupies residues 1-20 (MASFRLFLLCLAGLVFVSEA). Cys30 carries the post-translational modification Sulfocysteine. Residue Lys35 coordinates L-thyroxine. 4-carboxyglutamate is present on Glu62. A Phosphoserine modification is found at Ser72. Glu74 is an L-thyroxine binding site. Residue Asn118 is glycosylated (N-linked (GlcNAc...) asparagine). Residue Ser137 participates in L-thyroxine binding.

The protein belongs to the transthyretin family. In terms of assembly, homotetramer. Dimer of dimers. In the homotetramer, subunits assemble around a central channel that can accommodate two ligand molecules. Interacts with RBP4. Post-translationally, sulfonation of the reactive cysteine Cys-30 enhances the stability of the native conformation of TTR, avoiding misassembly of the protein leading to amyloid formation. In terms of tissue distribution, detected in serum (at protein level).

The protein resides in the secreted. In terms of biological role, thyroid hormone-binding protein. Probably transports thyroxine from the bloodstream to the brain. The chain is Transthyretin (TTR) from Bos taurus (Bovine).